A 1355-amino-acid chain; its full sequence is Patatin-like phospholipase domain-containing protein 6 (1355 aa).

The Lumenal portion of the chain corresponds to Met-1–Leu-43. Residue Asn-9 is glycosylated (N-linked (GlcNAc...) asparagine). Residues Gly-44–Val-64 form a helical membrane-spanning segment. Over Arg-65–Ala-1355 the chain is Cytoplasmic. Val-179–Arg-306 serves as a coordination point for a nucleoside 3',5'-cyclic phosphate. Ser-338 is subject to Phosphoserine. The segment at Ser-338–Pro-395 is disordered. Positions Thr-343 to Glu-361 are enriched in polar residues. Position 345 is a phosphothreonine (Thr-345). A phosphoserine mark is found at Ser-346, Ser-356, and Ser-405. Residues Glu-492–Arg-614 and Thr-610–Lys-730 each bind a nucleoside 3',5'-cyclic phosphate. The 167-residue stretch at Leu-961 to Arg-1127 folds into the PNPLA domain. The short motif at Gly-965–Gly-970 is the GXGXXG element. A GXSXG motif is present at residues Gly-992–Gly-996. The active-site Nucleophile is Ser-994. Catalysis depends on Asp-1114, which acts as the Proton acceptor. Residues Asp-1114–Gly-1116 carry the DGA/G motif. Positions Ser-1286–Ala-1355 are disordered. Residues Ala-1293 to Gly-1309 show a composition bias toward acidic residues.

Belongs to the NTE family. Post-translationally, glycosylated. As to expression, expressed in brain, testes and kidney (at protein level). Expressed ubiquitously in brain of young mice. Reaching adulthood, there is a most prominent expression in Purkinje cells, granule cells and pyramidal neurons of the hippocampus and some large neurons in the medulla oblongata, nucleus dentatus and pons.

The protein localises to the endoplasmic reticulum membrane. It catalyses the reaction a 1-acyl-sn-glycero-3-phosphocholine + H2O = sn-glycerol 3-phosphocholine + a fatty acid + H(+). The enzyme catalyses 1-hexadecanoyl-sn-glycero-3-phosphocholine + H2O = sn-glycerol 3-phosphocholine + hexadecanoate + H(+). The catalysed reaction is 1-hexadecanoyl-sn-glycero-3-phosphate + H2O = sn-glycerol 3-phosphate + hexadecanoate + H(+). It carries out the reaction 1-(9Z-octadecenoyl)-sn-glycero-3-phosphocholine + H2O = sn-glycerol 3-phosphocholine + (9Z)-octadecenoate + H(+). It catalyses the reaction 1-hexadecanoylglycerol + H2O = glycerol + hexadecanoate + H(+). The enzyme catalyses 2-hexadecanoylglycerol + H2O = glycerol + hexadecanoate + H(+). The catalysed reaction is 1-(9Z-octadecenoyl)-glycerol + H2O = glycerol + (9Z)-octadecenoate + H(+). It carries out the reaction 2-(9Z-octadecenoyl)-glycerol + H2O = glycerol + (9Z)-octadecenoate + H(+). It catalyses the reaction 2-(5Z,8Z,11Z,14Z-eicosatetraenoyl)-glycerol + H2O = glycerol + (5Z,8Z,11Z,14Z)-eicosatetraenoate + H(+). Inhibited by a series a OPs such as mipafox (MPX), phenyl saligenin phosphate (PSP), phenyl dipentyl phosphinate (PDPP), diisopropyl fluorophosphate and paraoxon. Functionally, phospholipase B that deacylates intracellular phosphatidylcholine (PtdCho), generating glycerophosphocholine (GroPtdCho). This deacylation occurs at both sn-2 and sn-1 positions of PtdCho. Catalyzes the hydrolysis of several naturally occurring membrane-associated lipids. Hydrolyzes lysophospholipids and monoacylglycerols, preferring the 1-acyl to the 2-acyl isomer. Does not catalyze hydrolysis of di- or triacylglycerols or fatty acid amides. This chain is Patatin-like phospholipase domain-containing protein 6 (Pnpla6), found in Mus musculus (Mouse).